Consider the following 262-residue polypeptide: MSRIHPTAIIEPGAQLHETVEVGPYAIVGSNVTIGARTTIGSHSVIEGHTTIGEDNRIGHYASVGGRPQDMKYKDEPTRLVIGDRNTIREFTTIHTGTVQDAGVTTLGDDNWIMAYVHIGHDCRVGSHVVLSSNAQMAGHVEIGDWAIVGGMSGVHQYVRIGAHSMLGGASALVQDIPPFVIAAGNKAEPHGINVEGLRRRGFSPDAISALRSAYRILYKNSLSLEEAKVQLSELAQAGGDGDAAVKALVDFVESSQRGIIR.

It belongs to the transferase hexapeptide repeat family. LpxA subfamily. In terms of assembly, homotrimer.

Its subcellular location is the cytoplasm. The catalysed reaction is a (3R)-hydroxyacyl-[ACP] + UDP-N-acetyl-alpha-D-glucosamine = a UDP-3-O-[(3R)-3-hydroxyacyl]-N-acetyl-alpha-D-glucosamine + holo-[ACP]. It functions in the pathway glycolipid biosynthesis; lipid IV(A) biosynthesis; lipid IV(A) from (3R)-3-hydroxytetradecanoyl-[acyl-carrier-protein] and UDP-N-acetyl-alpha-D-glucosamine: step 1/6. Functionally, involved in the biosynthesis of lipid A, a phosphorylated glycolipid that anchors the lipopolysaccharide to the outer membrane of the cell. This chain is Acyl-[acyl-carrier-protein]--UDP-N-acetylglucosamine O-acyltransferase, found in Burkholderia thailandensis (strain ATCC 700388 / DSM 13276 / CCUG 48851 / CIP 106301 / E264).